The sequence spans 494 residues: 4-trimethylaminobutyraldehyde dehydrogenase (494 aa).

Serine 2 is modified (N-acetylserine). Lysine 30 is modified (N6-acetyllysine; alternate). Lysine 30 carries the post-translational modification N6-succinyllysine; alternate. Position 59 is an N6-succinyllysine (lysine 59). NAD(+)-binding positions include lysine 180 and 232–236; that span reads GSVPT. The active-site Proton acceptor is glutamate 254. Catalysis depends on cysteine 288, which acts as the Nucleophile. The residue at position 298 (lysine 298) is an N6-acetyllysine. At lysine 303 the chain carries N6-acetyllysine; alternate. Position 303 is an N6-succinyllysine; alternate (lysine 303). Residue lysine 344 is modified to N6-acetyllysine. Glutamate 391 contributes to the NAD(+) binding site.

This sequence belongs to the aldehyde dehydrogenase family. Homotetramer.

The protein resides in the cytoplasm. Its subcellular location is the cytosol. The catalysed reaction is 4-(trimethylamino)butanal + NAD(+) + H2O = 4-(trimethylamino)butanoate + NADH + 2 H(+). The enzyme catalyses an aldehyde + NAD(+) + H2O = a carboxylate + NADH + 2 H(+). It carries out the reaction 4-aminobutanal + NAD(+) + H2O = 4-aminobutanoate + NADH + 2 H(+). It catalyses the reaction formaldehyde + NAD(+) + H2O = formate + NADH + 2 H(+). The catalysed reaction is acetaldehyde + NAD(+) + H2O = acetate + NADH + 2 H(+). The enzyme catalyses imidazole-4-acetaldehyde + NAD(+) + H2O = imidazole-4-acetate + NADH + 2 H(+). It carries out the reaction acrolein + NAD(+) + H2O = acrylate + NADH + 2 H(+). It catalyses the reaction (5-hydroxyindol-3-yl)acetaldehyde + NAD(+) + H2O = (5-hydroxyindol-3-yl)acetate + NADH + 2 H(+). The catalysed reaction is 3,4-dihydroxyphenylacetaldehyde + NAD(+) + H2O = 3,4-dihydroxyphenylacetate + NADH + 2 H(+). The enzyme catalyses spermine monoaldehyde + NAD(+) + H2O = N-(2-carboxyethyl)spermidine + NADH + 2 H(+). It carries out the reaction propanal + NAD(+) + H2O = propanoate + NADH + 2 H(+). It catalyses the reaction butanal + NAD(+) + H2O = butanoate + NADH + 2 H(+). The catalysed reaction is pentanal + NAD(+) + H2O = pentanoate + NADH + 2 H(+). The enzyme catalyses hexanal + NAD(+) + H2O = hexanoate + NADH + 2 H(+). It functions in the pathway amine and polyamine biosynthesis; carnitine biosynthesis. Converts gamma-trimethylaminobutyraldehyde into gamma-butyrobetaine with high efficiency (in vitro). Can catalyze the irreversible oxidation of a broad range of aldehydes to the corresponding acids in an NAD-dependent reaction, but with low efficiency. Catalyzes the oxidation of aldehydes arising from biogenic amines and polyamines. The protein is 4-trimethylaminobutyraldehyde dehydrogenase (ALDH9A1) of Sus scrofa (Pig).